An 88-amino-acid polypeptide reads, in one-letter code: Small ribosomal subunit protein uS17 (88 aa).

This sequence belongs to the universal ribosomal protein uS17 family. Part of the 30S ribosomal subunit.

In terms of biological role, one of the primary rRNA binding proteins, it binds specifically to the 5'-end of 16S ribosomal RNA. The chain is Small ribosomal subunit protein uS17 from Lawsonia intracellularis (strain PHE/MN1-00).